A 291-amino-acid chain; its full sequence is Glycine--tRNA ligase alpha subunit (291 aa).

This sequence belongs to the class-II aminoacyl-tRNA synthetase family. Tetramer of two alpha and two beta subunits.

The protein localises to the cytoplasm. The catalysed reaction is tRNA(Gly) + glycine + ATP = glycyl-tRNA(Gly) + AMP + diphosphate. This is Glycine--tRNA ligase alpha subunit from Trichlorobacter lovleyi (strain ATCC BAA-1151 / DSM 17278 / SZ) (Geobacter lovleyi).